A 149-amino-acid polypeptide reads, in one-letter code: Probable flagellum biosynthesis repressor protein FlbT (149 aa).

This sequence belongs to the FlbT family.

Functionally, has a post-transcriptional repressor function in flagellum biogenesis. Associates with the 5'-UTR of fljK mRNA and promotes its degradation. The polypeptide is Probable flagellum biosynthesis repressor protein FlbT (Sinorhizobium medicae (strain WSM419) (Ensifer medicae)).